A 208-amino-acid polypeptide reads, in one-letter code: Large ribosomal subunit protein uL4 (208 aa).

The disordered stretch occupies residues 45-83 (RQGTHKSKTRAEVRGGGRKPYRQKGTGNARQGSTRSPLM). Polar residues predominate over residues 69-80 (GTGNARQGSTRS).

It belongs to the universal ribosomal protein uL4 family. Part of the 50S ribosomal subunit.

Functionally, one of the primary rRNA binding proteins, this protein initially binds near the 5'-end of the 23S rRNA. It is important during the early stages of 50S assembly. It makes multiple contacts with different domains of the 23S rRNA in the assembled 50S subunit and ribosome. Its function is as follows. Forms part of the polypeptide exit tunnel. The chain is Large ribosomal subunit protein uL4 from Chlorobium luteolum (strain DSM 273 / BCRC 81028 / 2530) (Pelodictyon luteolum).